Here is a 431-residue protein sequence, read N- to C-terminus: Trigger factor (431 aa).

Residues 158 to 243 (GDLVAVETWS…VAEVSEPVVP (86 aa)) enclose the PPIase FKBP-type domain.

Belongs to the FKBP-type PPIase family. Tig subfamily.

It localises to the cytoplasm. It catalyses the reaction [protein]-peptidylproline (omega=180) = [protein]-peptidylproline (omega=0). Involved in protein export. Acts as a chaperone by maintaining the newly synthesized protein in an open conformation. Functions as a peptidyl-prolyl cis-trans isomerase. The protein is Trigger factor of Stenotrophomonas maltophilia (strain R551-3).